The primary structure comprises 128 residues: Small ribosomal subunit protein bS6 (128 aa).

It belongs to the bacterial ribosomal protein bS6 family.

Binds together with bS18 to 16S ribosomal RNA. This is Small ribosomal subunit protein bS6 from Nitratiruptor sp. (strain SB155-2).